We begin with the raw amino-acid sequence, 1161 residues long: MFELNNFESIKIALASPEKIRQWSRGEVKKPETINYRTLKPEKDGLFCERIFGPQKDWECHCGKYRRVRYKGVVCDRCGVEVTKSKVRRERMGHIELAAPMSHIWYFKGIPSRMGLLLDMSPRSLEKILYFASYVVVDPGETGLNEKQLLTEKEYRTALEKYGYTFTVGMGAEAVKTLLQNIDLEQQSKDLRAELKDSTGQKKVRTIRRLEVVEAFKKSGNKPEWMILDAIPVIPPDLRPMVQLDGGRFATSDLNDLYRRVINRNNRLKRLLELGAPDIIVRNEKRMLQEAVDALIDNGRRGRPVTGPGNRPLKSLSDMLKGKQGRFRQNLLGKRVDYSGRSVIVVGPELKFYQCGLPKKMALELFKPFVMDKLVKEGYAHNIKSAKSIVEKVKPEVWDVLEDVIKSHPVLLNRAPTLHRLGIQAFEPILVEGKAIKLHPLVCTAYNADFDGDQMAVHVPLSVEAQAEARFLMLSVNNILAPKDGSPITTPSQDMVLGCYYLTIEAQDGAKGTGMVFKDFNELLLAYYNKSVHLHALVKLKVTLEDGRSSLVESTVGRFIFNENIPQDLGFVDRKENPFALEVDFLADKKSLGKIIDKCFRKHGNTETAELLDYIKALGFKYSTLGGITVAVDDMSVPEEKKVFIAEAEAKVDKYEKAYRRGLISDEERYEKVIETWTETTDKVTDALMGGLDRLNNIYIMAHSGARGSKNQIRQLAGMRGLMANASGKTVEIPVKSNFREGLSVLEYFTSSHGARKGLADTAIRTAESGYLTRRLVDVSQDVIVREIDCGTEDTTEIYAIKEGNEVIEEIYDRIVGRYTIDPILNPETGEVIVEADSMIQEDEAETIVALGIEKIRIRTVLNCKTNHGVCSKCYGRNLATGKEVNIGEAVGIIAAQSIGEPGTQLTMRTFHTGGVAGADITQGLPRVEELFEARKPKGLAVITEVSGRVEIDETGKRKEVNVIPEEGETQTYVIPYGSRLKVKQGQMLEAGDPLTQGFINPHDIVRVNGVKGVQEYIVKEVQRVYRLQGVDVNDKHIEVIVRQMLSKVKVEDPGDTDLLPGGYEDVLTFNECNKDAIDKGLRPAVAKRVLLGITKASLATDSFLSAASFQETTRVLTEAAIKGKEDHLIGLKENVILGKLIPAGTGMKKYRNIAVEKIED.

Residues cysteine 60, cysteine 62, cysteine 75, and cysteine 78 each coordinate Zn(2+). Positions 449, 451, and 453 each coordinate Mg(2+). The Zn(2+) site is built by cysteine 790, cysteine 864, cysteine 871, and cysteine 874.

The protein belongs to the RNA polymerase beta' chain family. As to quaternary structure, the RNAP catalytic core consists of 2 alpha, 1 beta, 1 beta' and 1 omega subunit. When a sigma factor is associated with the core the holoenzyme is formed, which can initiate transcription. Mg(2+) is required as a cofactor. Requires Zn(2+) as cofactor.

The catalysed reaction is RNA(n) + a ribonucleoside 5'-triphosphate = RNA(n+1) + diphosphate. DNA-dependent RNA polymerase catalyzes the transcription of DNA into RNA using the four ribonucleoside triphosphates as substrates. This chain is DNA-directed RNA polymerase subunit beta', found in Clostridioides difficile (strain 630) (Peptoclostridium difficile).